The chain runs to 253 residues: Bridging integrator 3 (253 aa).

The region spanning 9-232 (GQPKKQIVSK…LDQPGHSDEH (224 aa)) is the BAR domain. Coiled-coil stretches lie at residues 16–57 (VSKT…AMSK) and 120–151 (SLNMAVKRREQALQDYGRLQAKVEKYEEKEKT).

Its subcellular location is the cytoplasm. The protein resides in the cytoskeleton. Functionally, involved in cytokinesis and septation where it has a role in the localization of F-actin. In Rattus norvegicus (Rat), this protein is Bridging integrator 3 (Bin3).